The sequence spans 98 residues: uncharacterized protein (98 aa).

2 consecutive transmembrane segments (helical) span residues 2–22 (IVTL…GLWW) and 70–90 (AAKA…LPIL).

The protein resides in the cell membrane. This is an uncharacterized protein from Sinorhizobium fredii (strain NBRC 101917 / NGR234).